Here is a 226-residue protein sequence, read N- to C-terminus: Phosphoglycolate phosphatase (226 aa).

The active-site Nucleophile is the aspartate 9. 2 residues coordinate Mg(2+): aspartate 9 and aspartate 11. Residue lysine 150 participates in substrate binding. The Mg(2+) site is built by aspartate 173 and aspartate 177.

Belongs to the archaeal SPP-like hydrolase family. The cofactor is Mg(2+).

The catalysed reaction is 2-phosphoglycolate + H2O = glycolate + phosphate. In terms of biological role, catalyzes the dephosphorylation of 2-phosphoglycolate. The protein is Phosphoglycolate phosphatase of Methanosarcina acetivorans (strain ATCC 35395 / DSM 2834 / JCM 12185 / C2A).